Reading from the N-terminus, the 1256-residue chain is Bifunctional autolysin (1256 aa).

Positions 1–29 (MAKKFNYKLPSMVALTLVGSAVTAHQVQA) are cleaved as a signal peptide. Residues 103 to 138 (GDTRANQSATTNNTQPVAKSTSTTAPKTNTNVTNAG) show a composition bias toward polar residues. Disordered stretches follow at residues 103–151 (GDTR…NSEN), 172–214 (KTAA…KTSL), and 419–440 (TQST…PSTG). 2 stretches are compositionally biased toward low complexity: residues 172 to 196 (KTAA…KVTT) and 421 to 439 (STTT…KPST). The tract at residues 199–775 (ASAQPRSVAA…AVAQPKTAVK (577 aa)) is N-acetylmuramoyl-L-alanine amidase. GW domains lie at 443 to 517 (TVAA…YNTA), 519 to 593 (SPVN…DTAK), 612 to 686 (TVSS…YNNA), 688 to 762 (SPVN…VPAA), 784 to 859 (TTQT…VQNL), 861 to 936 (KEVK…APTA), and 943 to 1017 (AAKD…KELI). The endo-beta-N-acetylglucosaminidase stretch occupies residues 776 to 1256 (AYTVTKPQTT…GKYFDIPQYK (481 aa)).

The protein in the N-terminal section; belongs to the N-acetylmuramoyl-L-alanine amidase 2 family. This sequence in the C-terminal section; belongs to the glycosyl hydrolase 73 family. Oligomer; forms a ring structure at the cell surface which is important for efficient partitioning of daughter cells after cell division. Undergoes proteolytic processing to generate the two extracellular lytic enzymes, probably at the septal region on the cell surface.

It is found in the secreted. It catalyses the reaction Hydrolyzes the link between N-acetylmuramoyl residues and L-amino acid residues in certain cell-wall glycopeptides.. The enzyme catalyses an N(4)-(oligosaccharide-(1-&gt;3)-[oligosaccharide-(1-&gt;6)]-beta-D-Man-(1-&gt;4)-beta-D-GlcNAc-(1-&gt;4)-alpha-D-GlcNAc)-L-asparaginyl-[protein] + H2O = an oligosaccharide-(1-&gt;3)-[oligosaccharide-(1-&gt;6)]-beta-D-Man-(1-&gt;4)-D-GlcNAc + N(4)-(N-acetyl-beta-D-glucosaminyl)-L-asparaginyl-[protein]. Endohydrolysis of the di-N-acetylchitobiosyl unit in high-mannose glycopeptides and glycoproteins containing the -[(Man)5(GlcNAc)2]-Asn structure. One N-acetyl-D-glucosamine residue remains attached to the protein; the rest of the oligosaccharide is released intact. Cleaves the peptidoglycan connecting the daughter cells at the end of the cell division cycle, resulting in the separation of the two newly divided cells. Acts as an autolysin in penicillin-induced lysis. This is Bifunctional autolysin (atl) from Staphylococcus aureus (strain NCTC 8325 / PS 47).